We begin with the raw amino-acid sequence, 588 residues long: Glutamyl-tRNA(Gln) amidotransferase subunit B, mitochondrial (588 aa).

The N-terminal 109 residues, 1 to 109, are a transit peptide targeting the mitochondrion; sequence MLRSWIGSGT…RAPTSTSETP (109 aa). Residues 22 to 35 show a composition bias toward low complexity; sequence SSLPSPKASFSSAP. The interval 22-50 is disordered; sequence SSLPSPKASFSSAPNRYLQPPTSADRVPL.

Belongs to the GatB/GatE family. GatB subfamily. In terms of assembly, subunit of the heterotrimeric GatCAB amidotransferase (AdT) complex, composed of A, B and C subunits.

It localises to the mitochondrion. It carries out the reaction L-glutamyl-tRNA(Gln) + L-glutamine + ATP + H2O = L-glutaminyl-tRNA(Gln) + L-glutamate + ADP + phosphate + H(+). Its function is as follows. Allows the formation of correctly charged Gln-tRNA(Gln) through the transamidation of misacylated Glu-tRNA(Gln) in the mitochondria. The reaction takes place in the presence of glutamine and ATP through an activated gamma-phospho-Glu-tRNA(Gln). This is Glutamyl-tRNA(Gln) amidotransferase subunit B, mitochondrial from Penicillium rubens (strain ATCC 28089 / DSM 1075 / NRRL 1951 / Wisconsin 54-1255) (Penicillium chrysogenum).